Reading from the N-terminus, the 444-residue chain is Ribosomal protein uS12 methylthiotransferase RimO (444 aa).

Residues 4-118 (IKYGVVSLGC…LSDAIKKSIE (115 aa)) enclose the MTTase N-terminal domain. Residues Cys13, Cys48, Cys81, Cys155, Cys159, and Cys162 each coordinate [4Fe-4S] cluster. One can recognise a Radical SAM core domain in the interval 141–373 (TTQKHYAYLR…MQRDIVKSIN (233 aa)). One can recognise a TRAM domain in the interval 374-440 (ADKVNKVYKV…EYDLIGVVCD (67 aa)).

It belongs to the methylthiotransferase family. RimO subfamily. [4Fe-4S] cluster is required as a cofactor.

It is found in the cytoplasm. The catalysed reaction is L-aspartate(89)-[ribosomal protein uS12]-hydrogen + (sulfur carrier)-SH + AH2 + 2 S-adenosyl-L-methionine = 3-methylsulfanyl-L-aspartate(89)-[ribosomal protein uS12]-hydrogen + (sulfur carrier)-H + 5'-deoxyadenosine + L-methionine + A + S-adenosyl-L-homocysteine + 2 H(+). Functionally, catalyzes the methylthiolation of an aspartic acid residue of ribosomal protein uS12. This is Ribosomal protein uS12 methylthiotransferase RimO from Clostridium tetani (strain Massachusetts / E88).